Consider the following 483-residue polypeptide: UDP-N-acetylmuramate--L-alanine ligase (483 aa).

ATP is bound at residue 125 to 131; the sequence is GTHGKTT.

Belongs to the MurCDEF family.

The protein localises to the cytoplasm. The catalysed reaction is UDP-N-acetyl-alpha-D-muramate + L-alanine + ATP = UDP-N-acetyl-alpha-D-muramoyl-L-alanine + ADP + phosphate + H(+). Its pathway is cell wall biogenesis; peptidoglycan biosynthesis. Cell wall formation. The chain is UDP-N-acetylmuramate--L-alanine ligase from Pseudoalteromonas translucida (strain TAC 125).